Consider the following 1195-residue polypeptide: Protein PIP82 (1195 aa).

A compositionally biased stretch (low complexity) spans 1–10 (MSHQEQQFQH). Disordered stretches follow at residues 1–55 (MSHQ…IGSS), 85–132 (KLRG…SQQF), 291–471 (NTFD…TANL), 493–515 (KVAKEPEELETKAEGSATGGASG), 544–567 (QRNANNQNATTSKQPKPNTVGHEP), 613–637 (EEDNEEDHSQDQTKRGQSSVSGIAT), 702–771 (MSPV…IVPK), 833–977 (SAGS…VKTS), and 1060–1195 (QITV…VVEI). Positions 11-26 (YPHHQHHHHHHHHHIH) are enriched in basic residues. Over residues 37-50 (RSSDLEPNRSRNTD) the composition is skewed to basic and acidic residues. The segment covering 109–118 (GSAKDGAGAA) has biased composition (low complexity). The segment covering 119–132 (QQTHLQVAGQSQQF) has biased composition (polar residues). Basic and acidic residues predominate over residues 300-313 (HEQFERGKISHETD). The segment covering 351–360 (QQAAAEESPQ) has biased composition (low complexity). A compositionally biased stretch (pro residues) spans 361-371 (ANPPPPPPPRP). The phospho-regulated basic and hydrophobic (PRBH) motif stretch occupies residues 400-450 (ETTKTAENADENNASRKLSIRQNIKRLRKSIKRPSKIKSKAAAPVPDSDEE). The segment covering 422–438 (NIKRLRKSIKRPSKIKS) has biased composition (basic residues). Positions 494 to 505 (VAKEPEELETKA) are enriched in basic and acidic residues. Over residues 545 to 560 (RNANNQNATTSKQPKP) the composition is skewed to polar residues. Composition is skewed to polar residues over residues 732–742 (SGPQKSMSYSP) and 856–867 (RVQSPQIGNSRE). Acidic residues predominate over residues 872–891 (QEEEDKEAERDSEEEEEERD). Composition is skewed to pro residues over residues 898-910 (SESPPPPPLPQRR) and 925-939 (VPPPLPVSKPPPPPS). Residues 940-968 (VETIPSVASLPSPAPVTRSMAQRSASMSR) are compositionally biased toward low complexity. Residues 1075 to 1085 (QSDQSDQSAHQ) show a composition bias toward polar residues. The segment covering 1086–1095 (EITDTRKTKS) has biased composition (basic and acidic residues). The span at 1102 to 1111 (RQNSNCSRSE) shows a compositional bias: polar residues. Composition is skewed to low complexity over residues 1114–1149 (SPLSFPSSRRSSTPTNLNANSNSNPNPSTNPNQNPS) and 1179–1195 (SYYSISPSGSSRYVVEI).

Phosphorylated by aPKC which lowers lipid affinity and promotes dissociation from the cell cortex. In the photoreceptor cells, aPKC-mediated phosphorylation leads to its displacement from the stalk apical cortex and thus restricts its localization to the rhabdomeric apical cortex where it functions. Dephosphorylation appears to be light-dependent. Restricted to photoreceptor cells (at protein level). Not detected until approximately 48hrs after puparium formation (APF) and then maintained in the photoreceptor cells post-eclosion (at protein level).

The protein localises to the cytoplasm. The protein resides in the cell cortex. Its subcellular location is the cytosol. It is found in the cell projection. It localises to the rhabdomere. Functionally, required for the morphological differentiation and maintenance of the rhabdomeric photoreceptor apical domain. Acts as a downstream component of the gl and Pph13 transcriptional pathway which is required for photoreceptor cell development. Likely to function by regulating the trafficking or retention of rhabdomeric proteins including the phototransduction proteins ninaE and didum. The chain is Protein PIP82 from Drosophila melanogaster (Fruit fly).